The following is a 218-amino-acid chain: N-(5'-phosphoribosyl)anthranilate isomerase (218 aa).

It belongs to the TrpF family.

The catalysed reaction is N-(5-phospho-beta-D-ribosyl)anthranilate = 1-(2-carboxyphenylamino)-1-deoxy-D-ribulose 5-phosphate. The protein operates within amino-acid biosynthesis; L-tryptophan biosynthesis; L-tryptophan from chorismate: step 3/5. This is N-(5'-phosphoribosyl)anthranilate isomerase from Stenotrophomonas maltophilia (strain K279a).